Consider the following 161-residue polypeptide: uncharacterized protein (161 aa).

Transmembrane regions (helical) follow at residues 22-42 (LFFI…VFGH), 43-63 (LTVG…ALLV), 89-109 (LAII…AGLG), and 110-130 (VVFG…LPVL). The segment at 141-161 (VATYSSNGQTGGSEGRSASDD) is disordered.

This sequence to M.leprae ML1138.

It is found in the cell membrane. This is an uncharacterized protein from Mycobacterium bovis (strain ATCC BAA-935 / AF2122/97).